A 232-amino-acid polypeptide reads, in one-letter code: C4-dicarboxylate TRAP transporter small permease protein DctQ (232 aa).

A run of 4 helical transmembrane segments spans residues 30–50 (EFLI…NVIM), 58–78 (ILWA…VGAS), 103–123 (LYAL…LIGS), and 167–187 (FIPY…FLQI).

The protein belongs to the TRAP transporter small permease family. The complex comprises the extracytoplasmic solute receptor protein DctP, and the two transmembrane proteins DctQ and DctM.

Its subcellular location is the cell inner membrane. In terms of biological role, part of the tripartite ATP-independent periplasmic (TRAP) transport system DctPQM involved in C4-dicarboxylates uptake. This Vibrio cholerae serotype O1 (strain ATCC 39315 / El Tor Inaba N16961) protein is C4-dicarboxylate TRAP transporter small permease protein DctQ.